The following is a 2194-amino-acid chain: Genome polyprotein (2194 aa).

A lipid anchor (N-myristoyl glycine; by host) is attached at glycine 2. Topologically, residues 2 to 1504 are cytoplasmic; that stretch reads GAQVSTQKTG…HVSRAFICLQ (1503 aa). An amphipathic alpha-helix region spans residues 566–582; it reads LYQNDPEGALNKAVGRV. Catalysis depends on for protease 2A activity residues histidine 881 and aspartate 899. Zn(2+)-binding residues include cysteine 916 and cysteine 918. Cysteine 970 (for protease 2A activity) is an active-site residue. Cysteine 976 and histidine 978 together coordinate Zn(2+). Residues 1110-1182 form a membrane-binding region; the sequence is NNNWLKKFTE…EQSAPSQSDQ (73 aa). An oligomerization region spans residues 1110-1248; sequence NNNWLKKFTE…SPGAGKSVAT (139 aa). Residues 1131 to 1135 form an RNA-binding region; that stretch reads AIKIQ. Positions 1214 to 1370 constitute an SF3 helicase domain; that stretch reads EKKMSNYIQF…SMYSQNGKIN (157 aa). Zn(2+) contacts are provided by cysteine 1378, cysteine 1390, and cysteine 1395. A C4-type; degenerate zinc finger spans residues 1378-1395; that stretch reads CDEECCPVNFKRCCPLVC. Positions 1422–1429 are RNA-binding; the sequence is EYNHRHSV. The tract at residues 1433–1438 is oligomerization; sequence LEALFQ. The stretch at 1505 to 1520 is an intramembrane region; it reads ALTTFVSVAGIIYIIY. At 1521-2194 the chain is on the cytoplasmic side; the sequence is KLFAGFQGAY…TLRRKWLDSF (674 aa). O-(5'-phospho-RNA)-tyrosine is present on tyrosine 1530. In terms of domain architecture, Peptidase C3 spans 1550 to 1728; it reads GPAFEFAVAM…FSAALLRHYF (179 aa). Catalysis depends on for protease 3C activity residues histidine 1589, glutamate 1620, and cysteine 1696. The RdRp catalytic domain occupies 1959–2075; that stretch reads GHLIAFDYSG…SYPHPIDASL (117 aa). Aspartate 1965 and aspartate 2061 together coordinate Mg(2+).

This sequence belongs to the picornaviruses polyprotein family. Interacts with capsid protein VP1 and capsid protein VP3 to form heterotrimeric protomers. In terms of assembly, interacts with capsid protein VP0, and capsid protein VP3 to form heterotrimeric protomers. Five protomers subsequently associate to form pentamers which serve as building blocks for the capsid. Interacts with capsid protein VP2, capsid protein VP3 and capsid protein VP4 following cleavage of capsid protein VP0. As to quaternary structure, interacts with capsid protein VP1 and capsid protein VP3 in the mature capsid. Interacts with capsid protein VP0 and capsid protein VP1 to form heterotrimeric protomers. Five protomers subsequently associate to form pentamers which serve as building blocks for the capsid. Interacts with capsid protein VP4 in the mature capsid. Interacts with protein 2C; this interaction may be important for virion morphogenesis. In terms of assembly, interacts with capsid protein VP1 and capsid protein VP3. As to quaternary structure, homodimer. Homohexamer; forms a hexameric ring structure with 6-fold symmetry characteristic of AAA+ ATPases. Interacts (via N-terminus) with host RTN3 (via reticulon domain); this interaction is important for viral replication. Interacts with capsid protein VP3; this interaction may be important for virion morphogenesis. In terms of assembly, interacts with protein 3CD. As to quaternary structure, homodimer. Interacts with host GBF1. Interacts (via GOLD domain) with host ACBD3 (via GOLD domain); this interaction allows the formation of a viral protein 3A/ACBD3 heterotetramer with a 2:2 stoichiometry, which will stimulate the recruitment of host PI4KB in order to synthesize PI4P at the viral RNA replication sites. Interacts with RNA-directed RNA polymerase. In terms of assembly, interacts with protein 3AB and with RNA-directed RNA polymerase. As to quaternary structure, interacts with Viral protein genome-linked and with protein 3CD. Mg(2+) is required as a cofactor. Specific enzymatic cleavages in vivo by the viral proteases yield processing intermediates and the mature proteins. Post-translationally, myristoylation is required for the formation of pentamers during virus assembly. Further assembly of 12 pentamers and a molecule of genomic RNA generates the provirion. In terms of processing, during virion maturation, immature virions are rendered infectious following cleavage of VP0 into VP4 and VP2. This maturation seems to be an autocatalytic event triggered by the presence of RNA in the capsid and it is followed by a conformational change infectious virion. Myristoylation is required during RNA encapsidation and formation of the mature virus particle. Post-translationally, VPg is uridylylated by the polymerase into VPg-pUpU. This acts as a nucleotide-peptide primer for the genomic RNA replication.

The protein resides in the virion. Its subcellular location is the host cytoplasm. It localises to the host cytoplasmic vesicle membrane. The protein localises to the host nucleus. It carries out the reaction a ribonucleoside 5'-triphosphate + H2O = a ribonucleoside 5'-diphosphate + phosphate + H(+). It catalyses the reaction Selective cleavage of Tyr-|-Gly bond in the picornavirus polyprotein.. The enzyme catalyses RNA(n) + a ribonucleoside 5'-triphosphate = RNA(n+1) + diphosphate. The catalysed reaction is Selective cleavage of Gln-|-Gly bond in the poliovirus polyprotein. In other picornavirus reactions Glu may be substituted for Gln, and Ser or Thr for Gly.. With respect to regulation, replication or transcription is subject to high level of random mutations by the nucleotide analog ribavirin. Forms an icosahedral capsid of pseudo T=3 symmetry with capsid proteins VP2 and VP3. The capsid is 300 Angstroms in diameter, composed of 60 copies of each capsid protein and enclosing the viral positive strand RNA genome. Capsid protein VP1 mainly forms the vertices of the capsid. Capsid protein VP1 interacts with host cell receptor to provide virion attachment to target host cells. This attachment induces virion internalization. Tyrosine kinases are probably involved in the entry process. After binding to its receptor, the capsid undergoes conformational changes. Capsid protein VP1 N-terminus (that contains an amphipathic alpha-helix) and capsid protein VP4 are externalized. Together, they shape a pore in the host membrane through which viral genome is translocated to host cell cytoplasm. In terms of biological role, forms an icosahedral capsid of pseudo T=3 symmetry with capsid proteins VP2 and VP3. The capsid is 300 Angstroms in diameter, composed of 60 copies of each capsid protein and enclosing the viral positive strand RNA genome. Functionally, lies on the inner surface of the capsid shell. After binding to the host receptor, the capsid undergoes conformational changes. Capsid protein VP4 is released, Capsid protein VP1 N-terminus is externalized, and together, they shape a pore in the host membrane through which the viral genome is translocated into the host cell cytoplasm. Its function is as follows. Component of immature procapsids, which is cleaved into capsid proteins VP4 and VP2 after maturation. Allows the capsid to remain inactive before the maturation step. Cysteine protease that cleaves viral polyprotein and specific host proteins. It is responsible for the autocatalytic cleavage between the P1 and P2 regions, which is the first cleavage occurring in the polyprotein. Also cleaves the host translation initiation factor EIF4G1, in order to shut down the capped cellular mRNA translation. Inhibits the host nucleus-cytoplasm protein and RNA trafficking by cleaving host members of the nuclear pores. Counteracts stress granule formation probably by antagonizing its assembly or promoting its dissassembly. In terms of biological role, plays an essential role in the virus replication cycle by acting as a viroporin. Creates a pore in the host endoplasmic reticulum and as a consequence releases Ca2+ in the cytoplasm of infected cell. In turn, high levels of cytoplasmic calcium may trigger membrane trafficking and transport of viral ER-associated proteins to viroplasms, sites of viral genome replication. Functionally, induces and associates with structural rearrangements of intracellular membranes. Displays RNA-binding, nucleotide binding and NTPase activities. May play a role in virion morphogenesis and viral RNA encapsidation by interacting with the capsid protein VP3. Its function is as follows. Localizes the viral replication complex to the surface of membranous vesicles. Together with protein 3CD binds the Cis-Active RNA Element (CRE) which is involved in RNA synthesis initiation. Acts as a cofactor to stimulate the activity of 3D polymerase, maybe through a nucleid acid chaperone activity. Localizes the viral replication complex to the surface of membranous vesicles. It inhibits host cell endoplasmic reticulum-to-Golgi apparatus transport and causes the disassembly of the Golgi complex, possibly through GBF1 interaction. This would result in depletion of MHC, trail receptors and IFN receptors at the host cell surface. Plays an essential role in viral RNA replication by recruiting ACBD3 and PI4KB at the viral replication sites, thereby allowing the formation of the rearranged membranous structures where viral replication takes place. In terms of biological role, acts as a primer for viral RNA replication and remains covalently bound to viral genomic RNA. VPg is uridylylated prior to priming replication into VPg-pUpU. The oriI viral genomic sequence may act as a template for this. The VPg-pUpU is then used as primer on the genomic RNA poly(A) by the RNA-dependent RNA polymerase to replicate the viral genome. During genome replication, the VPg-RNA linkage is removed by the host TDP2, thereby accelerating replication. During the late stage of the replication cycle, host TDP2 is excluded from sites of viral RNA synthesis and encapsidation, allowing for the generation of progeny virions. Functionally, involved in the viral replication complex and viral polypeptide maturation. It exhibits protease activity with a specificity and catalytic efficiency that is different from protease 3C. Protein 3CD lacks polymerase activity. Protein 3CD binds to the 5'UTR of the viral genome. Its function is as follows. Replicates the viral genomic RNA on the surface of intracellular membranes. May form linear arrays of subunits that propagate along a strong head-to-tail interaction called interface-I. Covalently attaches UMP to a tyrosine of VPg, which is used to prime RNA synthesis. The positive stranded RNA genome is first replicated at virus induced membranous vesicles, creating a dsRNA genomic replication form. This dsRNA is then used as template to synthesize positive stranded RNA genomes. ss(+)RNA genomes are either translated, replicated or encapsidated. Major viral protease that mediates proteolytic processing of the polyprotein. Cleaves host EIF5B, contributing to host translation shutoff. Also cleaves host PABPC1, contributing to host translation shutoff. Cleaves host NLRP1, triggers host N-glycine-mediated degradation of the autoinhibitory NLRP1 N-terminal fragment. The polypeptide is Genome polyprotein (Homo sapiens (Human)).